A 200-amino-acid chain; its full sequence is Potassium-transporting ATPase KdpC subunit (200 aa).

The chain crosses the membrane as a helical span at residues 6–26 (PAVVLLILLTLITGIAYPLLT).

This sequence belongs to the KdpC family. In terms of assembly, the system is composed of three essential subunits: KdpA, KdpB and KdpC.

The protein localises to the cell inner membrane. In terms of biological role, part of the high-affinity ATP-driven potassium transport (or Kdp) system, which catalyzes the hydrolysis of ATP coupled with the electrogenic transport of potassium into the cytoplasm. This subunit acts as a catalytic chaperone that increases the ATP-binding affinity of the ATP-hydrolyzing subunit KdpB by the formation of a transient KdpB/KdpC/ATP ternary complex. In Yersinia enterocolitica serotype O:8 / biotype 1B (strain NCTC 13174 / 8081), this protein is Potassium-transporting ATPase KdpC subunit.